The sequence spans 118 residues: Large ribosomal subunit protein bL20 (118 aa).

Belongs to the bacterial ribosomal protein bL20 family.

In terms of biological role, binds directly to 23S ribosomal RNA and is necessary for the in vitro assembly process of the 50S ribosomal subunit. It is not involved in the protein synthesizing functions of that subunit. The protein is Large ribosomal subunit protein bL20 of Fervidobacterium nodosum (strain ATCC 35602 / DSM 5306 / Rt17-B1).